Consider the following 481-residue polypeptide: UDP-glycosyltransferase 88F3 (481 aa).

UDP-alpha-D-glucose contacts are provided by residues serine 288, 357–358 (WA), 375–383 (HCGWNSVLE), and 397–400 (YAEQ).

It belongs to the UDP-glycosyltransferase family.

Functionally, glycosyltransferase that may possess chalcone and dihydrochalcone 2'-O-glucosyltransferase activity. The sequence is that of UDP-glycosyltransferase 88F3 from Pyrus communis (Pear).